A 159-amino-acid chain; its full sequence is MKIKLICVGKLKEAYLRDGIAEYQKRLSRFCQCDIIELADEKTPDKASDAEKQQIMAKEADRIKKKLGQRDFVIALAIEGKQLASEQFSHLLSEVTVKGYSDIAFVIGGSLGLDQSIKNRANLLMSFGLLTLPHQLMRLVLIEQVYRAFMIQQGSPYHK.

S-adenosyl-L-methionine is bound by residues Leu-76, Gly-108, and 127–132; that span reads FGLLTL.

Belongs to the RNA methyltransferase RlmH family. As to quaternary structure, homodimer.

It localises to the cytoplasm. It carries out the reaction pseudouridine(1915) in 23S rRNA + S-adenosyl-L-methionine = N(3)-methylpseudouridine(1915) in 23S rRNA + S-adenosyl-L-homocysteine + H(+). Its function is as follows. Specifically methylates the pseudouridine at position 1915 (m3Psi1915) in 23S rRNA. The polypeptide is Ribosomal RNA large subunit methyltransferase H (Streptococcus equi subsp. zooepidemicus (strain MGCS10565)).